A 331-amino-acid polypeptide reads, in one-letter code: MKQTVYTASPESQQIHVWSLNHEGTLTLVQVVDVPGQVQTMVVSPDKRYLYVGVRPEFRVLAYRIAPDDGALTFAAESALPGSPTHISTDHHGRFVFVGSYNAGNVSVTRLQDGLPVELVGVVEGLDGCHSANITPDNRTLWVPALKQDRICLFTLSDDGHLVAQEPAEVNTVEGAGPRHMVFHPNRQYAYCVNELNSSVDVWQLKNPHGEIECVQTLDMMPADFSDTRWAADIHITPDGRHLYACDRTASLITVFSVSEDGSVLSVEGFQPTEAQPRGFNIDNSGKYLIAAGQKSHHIAVYEITGTQGLLTEKGRYAVGQGPMWVVVNAY.

This sequence belongs to the cycloisomerase 2 family.

It catalyses the reaction 6-phospho-D-glucono-1,5-lactone + H2O = 6-phospho-D-gluconate + H(+). Its pathway is carbohydrate degradation; pentose phosphate pathway; D-ribulose 5-phosphate from D-glucose 6-phosphate (oxidative stage): step 2/3. Its function is as follows. Catalyzes the hydrolysis of 6-phosphogluconolactone to 6-phosphogluconate. This Salmonella gallinarum (strain 287/91 / NCTC 13346) protein is 6-phosphogluconolactonase.